A 337-amino-acid chain; its full sequence is Probable deoxyhypusine synthase (337 aa).

K308 functions as the Nucleophile in the catalytic mechanism.

It belongs to the deoxyhypusine synthase family. Requires NAD(+) as cofactor.

It carries out the reaction [eIF5A protein]-L-lysine + spermidine = [eIF5A protein]-deoxyhypusine + propane-1,3-diamine. It functions in the pathway protein modification; eIF5A hypusination. Its function is as follows. Catalyzes the NAD-dependent oxidative cleavage of spermidine and the subsequent transfer of the butylamine moiety of spermidine to the epsilon-amino group of a specific lysine residue of the eIF-5A precursor protein to form the intermediate deoxyhypusine residue. The protein is Probable deoxyhypusine synthase of Thermococcus kodakarensis (strain ATCC BAA-918 / JCM 12380 / KOD1) (Pyrococcus kodakaraensis (strain KOD1)).